The following is a 395-amino-acid chain: Elongation factor Tu (395 aa).

In terms of domain architecture, tr-type G spans 10–205; the sequence is KPHCNIGTIG…AVDSYIPQPE (196 aa). Residues 19-26 form a G1 region; that stretch reads GHVDHGKT. 19-26 is a GTP binding site; that stretch reads GHVDHGKT. Threonine 26 is a Mg(2+) binding site. Positions 60–64 are G2; it reads GITIA. A G3 region spans residues 81 to 84; sequence DCPG. GTP is bound by residues 81 to 85 and 136 to 139; these read DCPGH and NKMD. Positions 136 to 139 are G4; that stretch reads NKMD. Residues 173–175 form a G5 region; sequence SAL.

The protein belongs to the TRAFAC class translation factor GTPase superfamily. Classic translation factor GTPase family. EF-Tu/EF-1A subfamily. In terms of assembly, monomer.

It localises to the cytoplasm. The enzyme catalyses GTP + H2O = GDP + phosphate + H(+). Its function is as follows. GTP hydrolase that promotes the GTP-dependent binding of aminoacyl-tRNA to the A-site of ribosomes during protein biosynthesis. This chain is Elongation factor Tu, found in Acidiphilium cryptum (strain JF-5).